A 250-amino-acid polypeptide reads, in one-letter code: Probable transcriptional regulatory protein Emin_1151 (250 aa).

Belongs to the TACO1 family.

It localises to the cytoplasm. This chain is Probable transcriptional regulatory protein Emin_1151, found in Elusimicrobium minutum (strain Pei191).